A 407-amino-acid chain; its full sequence is Arrestin domain-containing protein 2 (407 aa).

Belongs to the arrestin family. In terms of assembly, interacts with WWP1 (via WW domains).

The sequence is that of Arrestin domain-containing protein 2 (ARRDC2) from Homo sapiens (Human).